Here is a 226-residue protein sequence, read N- to C-terminus: Ribonuclease 3 (226 aa).

The 123-residue stretch at 7-129 (LARLSRTLGY…IIGAVYLDAN (123 aa)) folds into the RNase III domain. Residue E42 coordinates Mg(2+). Residue D46 is part of the active site. Residues D115 and E118 each coordinate Mg(2+). E118 is a catalytic residue. Positions 156-226 (DPKTILQEYL…AAQILELINK (71 aa)) constitute a DRBM domain.

Belongs to the ribonuclease III family. As to quaternary structure, homodimer. It depends on Mg(2+) as a cofactor.

The protein localises to the cytoplasm. The enzyme catalyses Endonucleolytic cleavage to 5'-phosphomonoester.. Its function is as follows. Digests double-stranded RNA. Involved in the processing of primary rRNA transcript to yield the immediate precursors to the large and small rRNAs (23S and 16S). Processes some mRNAs, and tRNAs when they are encoded in the rRNA operon. Processes pre-crRNA and tracrRNA of type II CRISPR loci if present in the organism. The sequence is that of Ribonuclease 3 from Shewanella denitrificans (strain OS217 / ATCC BAA-1090 / DSM 15013).